An 85-amino-acid polypeptide reads, in one-letter code: Putative membrane protein insertion efficiency factor (85 aa).

Belongs to the UPF0161 family.

The protein resides in the cell membrane. In terms of biological role, could be involved in insertion of integral membrane proteins into the membrane. The polypeptide is Putative membrane protein insertion efficiency factor (Buchnera aphidicola subsp. Baizongia pistaciae (strain Bp)).